The chain runs to 183 residues: Probable chorismate pyruvate-lyase 2 (183 aa).

Arg-76, Leu-114, and Glu-166 together coordinate substrate.

Belongs to the UbiC family.

It is found in the cytoplasm. It catalyses the reaction chorismate = 4-hydroxybenzoate + pyruvate. The protein operates within cofactor biosynthesis; ubiquinone biosynthesis. Functionally, removes the pyruvyl group from chorismate, with concomitant aromatization of the ring, to provide 4-hydroxybenzoate (4HB) for the ubiquinone pathway. In Pseudomonas fluorescens (strain Pf0-1), this protein is Probable chorismate pyruvate-lyase 2.